The following is a 635-amino-acid chain: Cilia- and flagella-associated protein 206 (635 aa).

It belongs to the CFAP206 family.

The protein localises to the cytoplasm. The protein resides in the cytoskeleton. It localises to the cilium axoneme. Functionally, may regulate cilium motility through its role in the assembly of the axonemal RS2 radial spoke. The polypeptide is Cilia- and flagella-associated protein 206 (Tetrahymena thermophila (strain SB210)).